Here is a 518-residue protein sequence, read N- to C-terminus: Cytochrome P450 monooxygenase ARMGADRAFT_1018417 (518 aa).

A helical membrane pass occupies residues 3–23 (LFSAYALAFSLLMIPLILYIL). Cys-433 provides a ligand contact to heme. Asn-455 carries an N-linked (GlcNAc...) asparagine glycan.

This sequence belongs to the cytochrome P450 family. It depends on heme as a cofactor.

It is found in the membrane. It participates in secondary metabolite biosynthesis. Cytochrome P450 monooxygenase, part of the gene cluster that mediates the biosynthesis of melleolides, a range of antifungal and phytotoxic polyketide derivatives composed of an orsellinic acid (OA) moiety esterified to various sesquiterpene alcohols. The first step in melleolides biosynthesis is performed by the delta(6)-protoilludene synthase PRO1 which catalyzes the cyclization of farnesyl diphosphate to protoilludene. The orsellinic acid synthase armB produces OA by condensing acetyl-CoA with 3 malonyl-CoA units in a three-round chain elongation reaction folowed by a C2-C7 ring closure. ArmB further catalyzes the trans-esterification of OA to the various sesquiterpene alcohols resulting from the hydroxylation of protoilludene. The melleolides cluster also includes 5 cytochrome P450 monooxygenases, 4 NAD(+)-dependent oxidoreductases, one flavin-dependent oxidoreductase, and one O-methyltransferase. The cytochrome P450 monooxygenases may be involved in protoilludene hydroxylation to elaborate melleolides with multiple alcohol groups, such as melleolide D, which carries alcohol functionalities at C-4, C-5, C-10, and C-13. The role of the NAD(+)-dependent enzymes remains unknown. Numerous melleolides, including arnamial, show 5'-O-methylation of the aromatic moiety which may be catalyzed by the methyltransferase encoded in the cluster. The flavin-dependent oxidoreductase might represent the dehydrogenase yielding the aldehyde in position 1 of arnamial and other melleolides. Finally, several halogenase localized outside of the cluster, are able to catalyze the transfer of a single chlorine atom to the melleolide backbone, resulting in a 6'-chloromelleolide product. This Armillaria gallica (Bulbous honey fungus) protein is Cytochrome P450 monooxygenase ARMGADRAFT_1018417.